The primary structure comprises 457 residues: MIKLSTVQLAQILQAKLIGDENVQVEKINTDTRKSVSNSLFFALKGEKFDAHQYLDQAVSQGALALVVQQENSSISVPQLVVKDTRIALGELAKWLREKINPRTVAMTGSSGKTTVKEMTASILQHTAADSEAVLFTNGNFNNDIGVPLTLLRLTEKHRFAVIELGANHQNEINYTTKLVQPNAALINNIAPAHLEGFGSLAGVVQAKGEIYRGLTKNGVAIINAEHNHLDIWQKEISNHAIQYFNGKDYSAKNIHHTSQGSTFTLISPQGEIEITLPYLGEHNVKNALAATALAMNVGATLTDVKAGLEQRSQVKGRLFPIQVTPNLLLLDDTYNANKDSLCAAIDVLKGYDAFRILCVGDMKELGENSLAIHREVGQYINLVNLDLVCSYGNESAVISEAVSGKHFTDKTEMVDFLVPLIENQLQQNKKVVVLGKGSRSMKMEDVIYSLKDKIKC.

Position 109-115 (G109–T115) interacts with ATP.

It belongs to the MurCDEF family. MurF subfamily.

The protein resides in the cytoplasm. It carries out the reaction D-alanyl-D-alanine + UDP-N-acetyl-alpha-D-muramoyl-L-alanyl-gamma-D-glutamyl-meso-2,6-diaminopimelate + ATP = UDP-N-acetyl-alpha-D-muramoyl-L-alanyl-gamma-D-glutamyl-meso-2,6-diaminopimeloyl-D-alanyl-D-alanine + ADP + phosphate + H(+). It participates in cell wall biogenesis; peptidoglycan biosynthesis. Its function is as follows. Involved in cell wall formation. Catalyzes the final step in the synthesis of UDP-N-acetylmuramoyl-pentapeptide, the precursor of murein. The sequence is that of UDP-N-acetylmuramoyl-tripeptide--D-alanyl-D-alanine ligase from Haemophilus influenzae (strain ATCC 51907 / DSM 11121 / KW20 / Rd).